Here is a 692-residue protein sequence, read N- to C-terminus: MAREFSLEKTRNIGIMAHIDAGKTTTTERILFYTGRIHKIGETHEGASQMDWMEQEQERGITITSAATTAQWKGYRVNIIDTPGHVDFTVEVERSLRVLDGAVAVLDAQSGVEPQTETVWRQATTYGVPRIVFVNKMDKIGADFLYSVGTLRDRLQANAHAIQLPIGAEDNFEGIIDLVENVAYFYEDDLGTRSDAKEIPEEYKEQAEELRNSLIEAVCELDEELMDKYLEGEEITIDELKAGIRKGTLNVEFYPVLVGSAFKNKGVQLVLDAVLDYLPAPTDVAAIKGTRPDTNEEIERHSSDEEPFSALAFKVMTDPYVGKLTFFRVYSGTLDSGSYVKNSTKGKRERVGRILQMHANSREEISTVYAGDIAAAVGLKDTTTGDTLCDEKDLVILESMEFPEPVIDVAIEPKSKADQDKMGIALAKLAEEDPTFRTQTNPETGQTIISGMGELHLDIIVDRMKREFKVEANVGAPQVAYRETFRTGAKVEGKFVRQSGGRGQFGHVWIEFEPNEEGAGFEFENAIVGGVVPREYIPAVQAGLEDALENGVLAGFPLIDIKAKLFDGSYHDVDSNEMAFKVAASMALKNAVSKCNPVLLEPIMKVEVVIPEEYMGDIMGDITSRRGRVEGMEARGNAQVVRAMVPLAEMFGYATALRSNTQGRGTFTMHMDHYEEVPKSVAEEIIKKNKGE.

In terms of domain architecture, tr-type G spans 8–282; that stretch reads EKTRNIGIMA…AVLDYLPAPT (275 aa). Residues 17-24, 81-85, and 135-138 contribute to the GTP site; these read AHIDAGKT, DTPGH, and NKMD. A phosphoserine mark is found at S213, S302, S569, and S680.

It belongs to the TRAFAC class translation factor GTPase superfamily. Classic translation factor GTPase family. EF-G/EF-2 subfamily. Phosphorylated on threonine residue(s). Phosphorylated by PrkC and dephosphorylated by PrpC, in vitro.

The protein resides in the cytoplasm. Functionally, catalyzes the GTP-dependent ribosomal translocation step during translation elongation. During this step, the ribosome changes from the pre-translocational (PRE) to the post-translocational (POST) state as the newly formed A-site-bound peptidyl-tRNA and P-site-bound deacylated tRNA move to the P and E sites, respectively. Catalyzes the coordinated movement of the two tRNA molecules, the mRNA and conformational changes in the ribosome. The protein is Elongation factor G (fusA) of Bacillus subtilis (strain 168).